The chain runs to 198 residues: Potassium-transporting ATPase KdpC subunit (198 aa).

Residues 8–28 (ILAVLVFTILCGIIYPVSTTV) form a helical membrane-spanning segment.

The protein belongs to the KdpC family. The system is composed of three essential subunits: KdpA, KdpB and KdpC.

It is found in the cell membrane. Functionally, part of the high-affinity ATP-driven potassium transport (or Kdp) system, which catalyzes the hydrolysis of ATP coupled with the electrogenic transport of potassium into the cytoplasm. This subunit acts as a catalytic chaperone that increases the ATP-binding affinity of the ATP-hydrolyzing subunit KdpB by the formation of a transient KdpB/KdpC/ATP ternary complex. The sequence is that of Potassium-transporting ATPase KdpC subunit from Clostridium perfringens (strain ATCC 13124 / DSM 756 / JCM 1290 / NCIMB 6125 / NCTC 8237 / Type A).